The primary structure comprises 107 residues: Putative ankyrin repeat protein L14 (107 aa).

ANK repeat units lie at residues 19-48 (DNNY…NIRA), 49-78 (DNDC…NIRA), and 80-107 (NDCA…AVLS).

This Acanthamoeba polyphaga (Amoeba) protein is Putative ankyrin repeat protein L14.